Consider the following 365-residue polypeptide: Palmitoyltransferase ZDHHC20 (365 aa).

Residues 1-14 (MAPCTLWRCCQRTV) are Cytoplasmic-facing. A helical transmembrane segment spans residues 15–35 (GWVPVLFITFVVVWSYYAYVV). The Lumenal portion of the chain corresponds to 36–53 (ELCVFTLSGNGENGKAVV). Residues 54 to 74 (YLVAFHLFFVMFVWSYWMTIF) form a helical membrane-spanning segment. Over 75–169 (TSPASPSKEF…NNCVGFSNYK (95 aa)) the chain is Cytoplasmic. Positions 126 to 176 (RYCERCQLIKPDRAHHCSACDMCILKMDHHCPWVNNCVGFSNYKFFLLFLF) constitute a DHHC domain. Residues C128 and C131 each contribute to the Zn(2+) site. Residues K135 and 140–143 (HHCS) contribute to the substrate site. 5 residues coordinate Zn(2+): H141, C142, C145, C148, and H155. Residue C156 is the S-palmitoyl cysteine intermediate of the active site. C162 provides a ligand contact to Zn(2+). A helical membrane pass occupies residues 170–190 (FFLLFLFYSLLYCLFVATTVL). At 191–207 (QYFIKFWTNELTDTRAK) the chain is on the lumenal side. The chain crosses the membrane as a helical span at residues 208-231 (FHVLFLFFVSTMFFISVLSLLSYH). Residues 232–365 (CWLVGKNRTT…NNHVTVAIEN (134 aa)) are Cytoplasmic-facing. A disordered region spans residues 301–365 (PEQASVSNQS…NNHVTVAIEN (65 aa)). Polar residues predominate over residues 302–321 (EQASVSNQSESARSIGSNQP). Phosphoserine occurs at positions 305 and 330.

This sequence belongs to the DHHC palmitoyltransferase family. In terms of processing, autopalmitoylated (in vitro).

It is found in the golgi apparatus membrane. The protein localises to the cell membrane. Its subcellular location is the cytoplasm. It localises to the perinuclear region. The protein resides in the endoplasmic reticulum membrane. It is found in the endoplasmic reticulum-Golgi intermediate compartment membrane. It carries out the reaction L-cysteinyl-[protein] + hexadecanoyl-CoA = S-hexadecanoyl-L-cysteinyl-[protein] + CoA. The catalysed reaction is L-cysteinyl-[protein] + tetradecanoyl-CoA = S-tetradecanoyl-L-cysteinyl-[protein] + CoA. It catalyses the reaction L-cysteinyl-[protein] + octadecanoyl-CoA = S-octadecanoyl-L-cysteinyl-[protein] + CoA. Its function is as follows. Palmitoyltransferase that could catalyze the addition of palmitate onto various protein substrates. Catalyzes palmitoylation of Cys residues in the cytoplasmic C-terminus of EGFR, and modulates the duration of EGFR signaling by modulating palmitoylation-dependent EGFR internalization and degradation. Has a preference for acyl-CoA with C16 fatty acid chains. Can also utilize acyl-CoA with C14 and C18 fatty acid chains. May palmitoylate CALHM1 subunit of gustatory voltage-gated ion channels and modulate channel gating and kinetics. This chain is Palmitoyltransferase ZDHHC20, found in Bos taurus (Bovine).